A 494-amino-acid chain; its full sequence is Potassium voltage-gated channel subfamily A member 2 (494 aa).

Residues 1–25 (MTVATGDPSDEAAAHPGNPAEYDPD) form a disordered region. The segment at 1–124 (MTVATGDPSD…YELGDEAIEL (124 aa)) is tetramerization domain. The Cytoplasmic portion of the chain corresponds to 1–159 (MTVATGDPSD…LLFEYPESSG (159 aa)). Residues 160–181 (PARIIAIISVMVILISIVSFCL) form a helical membrane-spanning segment. The Extracellular segment spans residues 182–216 (ETLPIFRNDDDEPHSVFDTNTNTTIYFTSTYFTDP). A glycan (N-linked (GlcNAc...) asparagine) is linked at Asn-203. A helical transmembrane segment spans residues 217–238 (FFILETLCIIWFSFEFLVRLFA). Cys-239 carries S-palmitoyl cysteine lipidation. Over 239-249 (CPSKSGFFGNV) the chain is Cytoplasmic. Residues 250–270 (MNIIDVVAIIPYFITLATELA) traverse the membrane as a helical segment. Residues 271–284 (EKPEDGQAGQQAMS) are Extracellular-facing. A helical; Voltage-sensor transmembrane segment spans residues 285–305 (LAILRVIRLVRVFRIFKLSRH). Residues 306-320 (SKGLQILGQTLKASM) are Cytoplasmic-facing. The tract at residues 307-320 (KGLQILGQTLKASM) is S4-S5 linker. The chain crosses the membrane as a helical span at residues 321 to 342 (RELGLLIFFLFIGVILFSSAVY). At 343–356 (FAEADEPESQFESI) the chain is on the extracellular side. Positions 357–368 (PDAFWWAVVSMT) form an intramembrane region, helical. A Selectivity filter motif is present at residues 369 to 374 (TVGYGD). An intramembrane segment occupies 369–376 (TVGYGDMV). Topologically, residues 377-383 (PTTIGGK) are extracellular. Residues 384–412 (IVGSLCAIAGVLTIALPVPVIVSNFNYFY) traverse the membrane as a helical segment. The Cytoplasmic segment spans residues 413–494 (HRETEGEEQA…VNITKMLTDV (82 aa)). Positions 492–494 (TDV) match the PDZ-binding motif.

It belongs to the potassium channel family. A (Shaker) (TC 1.A.1.2) subfamily. Kv1.2/KCNA2 sub-subfamily. As to quaternary structure, homotetramer and heterotetramer with other family members. Expressed in oligodendrocytes.

It localises to the cell membrane. The catalysed reaction is K(+)(in) = K(+)(out). Functionally, voltage-gated potassium channel that mediates transmembrane potassium transport in excitable membranes, primarily in the brain and central nervous system. Prevents aberrant action potential firing and regulates neuronal output. Forms tetrameric potassium-selective channels through which potassium ions pass in accordance with their electrochemical gradient. The channel alternates between opened and closed conformations in response to the voltage difference across the membrane. Can form functional homotetrameric channels and heterotetrameric channels with other family members; the channels characteristics depend critically on the types of channel-forming alpha subunits that are present. Channel properties are modulated by cytoplasmic beta subunits that regulate the subcellular location of the alpha subunits. In vivo, membranes probably contain a mixture of heteromeric potassium channel complexes, making it difficult to assign currents observed in intact tissues to any particular potassium channel family member. Homotetrameric KCNA2 forms a delayed-rectifier potassium channel that opens in response to membrane depolarization, followed by slow spontaneous channel closure. Regulates neuronal excitability and plays a role as pacemaker in the regulation of neuronal action potentials. KCNA2-containing channels play a presynaptic role and prevent hyperexcitability and aberrant action potential firing. Response to toxins that are selective for KCNA2-containing potassium channels suggests that in Purkinje cells, dendritic subthreshold KCNA2-containing potassium channels prevent random spontaneous calcium spikes, suppressing dendritic hyperexcitability without hindering the generation of somatic action potentials, and thereby play an important role in motor coordination. Plays a role in the induction of long-term potentiation of neuron excitability in the CA3 layer of the hippocampus. The polypeptide is Potassium voltage-gated channel subfamily A member 2 (kcna2) (Oncorhynchus mykiss (Rainbow trout)).